The chain runs to 275 residues: NH(3)-dependent NAD(+) synthetase (275 aa).

50 to 57 (GISGGVDS) is an ATP binding site. Aspartate 56 contributes to the Mg(2+) binding site. Arginine 147 contacts deamido-NAD(+). Threonine 167 contacts ATP. Glutamate 172 contacts Mg(2+). Deamido-NAD(+) contacts are provided by lysine 180 and aspartate 187. 2 residues coordinate ATP: lysine 196 and threonine 218. A deamido-NAD(+)-binding site is contributed by 267–268 (HK).

This sequence belongs to the NAD synthetase family. Homodimer.

The catalysed reaction is deamido-NAD(+) + NH4(+) + ATP = AMP + diphosphate + NAD(+) + H(+). It participates in cofactor biosynthesis; NAD(+) biosynthesis; NAD(+) from deamido-NAD(+) (ammonia route): step 1/1. In terms of biological role, catalyzes the ATP-dependent amidation of deamido-NAD to form NAD. Uses ammonia as a nitrogen source. This Pseudomonas aeruginosa (strain UCBPP-PA14) protein is NH(3)-dependent NAD(+) synthetase.